An 875-amino-acid polypeptide reads, in one-letter code: MRLLKYPLDIHNEQVNALAALGPYIILAGSGGHVMAWRQQQLVDTAFDRVMIKDLKPEVSFQVDQDTTGDIFFITGDLETLYIGSEHRLWGYSGWLCRDTNNINSVEKMNSKLLFECKSPSTITDVKYDINLGILFVLLSNENKILLFRHKTFDKLSEITIDKASKPITGIIDPTGQTFTVMTSDRSILVYQINKTGTHKLINKLTQHVQMYPLHYRISMSPQADILPVINSVKGVPNNATSCTALLDRNNNYKVTKTLVTPSSNGCRVLVYSPAFYEKPNLKKGTSTRYNLIATSGSTDGTILVWNTKRMKPLFNALQVSSTAINDMSWSQDGFTLFAISNDATLYTFAFQEKDLGVALPQTEIKSLQEVNKKLPKLEEPLAEQIPKSFPENIKLEESASAAPIPNDIGRSAVGKKPTKKKTANNQTNGIKTIQSTSMEFNTPSYTVPRDLKRKPKEATPSNIAPGSKKQKKELQPIDFLDTGLLLPNTSFSRIRLATPKIRSTFKYSPINNPNLILDVKNGSGNEQRPTIVKLTSKVLDQDQVLFQDFIPKLITICTAGDTFWSFCSEDGSIYIYSDSGRKLMAPLVLGVSISFLEACGTYLLCLTSIGELYCWNIEQKKLAFPTNTIYPLLNPSLRYSDDILTRAENITLCSITKKGVPLVTLSNGDGYLFDKNMETWLLVSDGWWAYGSQYWDTTNTTGLSSSKANTDSFNGSESNINEIVSDIKNDNQSIINFLECKTNDELNRKGRIKNLQRFARTILMKEGFENMEEIVTLSHLENKILISIRLEEPEEFSKLMMVYCIRLSELGYMDRLNDVFQWLYDDLPISGTGSAFADKDFKRNLLKKILIACGDIRQVQRVTTRYAKEMNIIS.

6 WD repeats span residues 10 to 47, 118 to 158, 163 to 201, 237 to 277, 278 to 316, and 320 to 359; these read IHNE…DTAF, KSPS…KLSE, KASK…THKL, PNNA…PAFY, EKPN…PLFN, and VSST…LGVA. The tract at residues 398–473 is disordered; it reads ESASAAPIPN…IAPGSKKQKK (76 aa). The segment covering 424–446 has biased composition (polar residues); it reads ANNQTNGIKTIQSTSMEFNTPSY. WD repeat units follow at residues 546–587 and 589–626; these read LFQD…LMAP and VLGV…LAFP. At Ser713 the chain carries Phosphoserine.

It belongs to the WD repeat HIR1 family. As to quaternary structure, component of the HIR complex, composed of HIR1, HIR2, HIR3 and HPC2. This complex may consist of one copy of HIR1 and HIR3 and two copies of HIR2 and HPC2. The HIR complex interacts with ASF1. Interacts with SNF2. Interacts with SNF5. Interacts with SWI3. Interacts with RTT106.

Its subcellular location is the nucleus. It localises to the chromosome. In terms of biological role, component of the HIR complex, which cooperates with ASF1 to promote replication-independent chromatin assembly. The HIR complex is also required for the periodic repression of three of the four histone gene loci during the cell cycle as well as for autogenous regulation of the HTA1-HTB1 locus by H2A and H2B. DNA-binding by the HIR complex may repress transcription by inhibiting nucleosome remodeling by the SWI/SNF complex. The HIR complex may also be required for transcriptional silencing of centromeric, telomeric and mating-type loci in the absence of CAF-1. The sequence is that of Protein HIR2 (HIR2) from Saccharomyces cerevisiae (strain ATCC 204508 / S288c) (Baker's yeast).